The following is a 167-amino-acid chain: Crossover junction endodeoxyribonuclease RuvC (167 aa).

Catalysis depends on residues Asp-8, Glu-68, and Asp-140. Positions 8, 68, and 140 each coordinate Mg(2+).

It belongs to the RuvC family. As to quaternary structure, homodimer which binds Holliday junction (HJ) DNA. The HJ becomes 2-fold symmetrical on binding to RuvC with unstacked arms; it has a different conformation from HJ DNA in complex with RuvA. In the full resolvosome a probable DNA-RuvA(4)-RuvB(12)-RuvC(2) complex forms which resolves the HJ. It depends on Mg(2+) as a cofactor.

It localises to the cytoplasm. The catalysed reaction is Endonucleolytic cleavage at a junction such as a reciprocal single-stranded crossover between two homologous DNA duplexes (Holliday junction).. In terms of biological role, the RuvA-RuvB-RuvC complex processes Holliday junction (HJ) DNA during genetic recombination and DNA repair. Endonuclease that resolves HJ intermediates. Cleaves cruciform DNA by making single-stranded nicks across the HJ at symmetrical positions within the homologous arms, yielding a 5'-phosphate and a 3'-hydroxyl group; requires a central core of homology in the junction. The consensus cleavage sequence is 5'-(A/T)TT(C/G)-3'. Cleavage occurs on the 3'-side of the TT dinucleotide at the point of strand exchange. HJ branch migration catalyzed by RuvA-RuvB allows RuvC to scan DNA until it finds its consensus sequence, where it cleaves and resolves the cruciform DNA. This chain is Crossover junction endodeoxyribonuclease RuvC, found in Sinorhizobium medicae (strain WSM419) (Ensifer medicae).